We begin with the raw amino-acid sequence, 360 residues long: uncharacterized protein (360 aa).

Over residues E22 to E32 the composition is skewed to acidic residues. Residues E22 to G55 form a disordered region. The segment covering V37–R50 has biased composition (basic residues).

This is an uncharacterized protein from Caenorhabditis elegans.